The sequence spans 154 residues: Putative antiporter subunit mnhG2 (154 aa).

The next 3 membrane-spanning stretches (helical) occupy residues 11–31 (IASI…IGIV), 51–71 (VLLT…FFSV), and 72–92 (RLLL…HLIS).

It belongs to the CPA3 antiporters (TC 2.A.63) subunit G family. May form a heterooligomeric complex that consists of seven subunits: mnhA2, mnhB2, mnhC2, mnhD2, mnhE2, mnhF2 and mnhG2.

It localises to the cell membrane. This Staphylococcus epidermidis (strain ATCC 35984 / DSM 28319 / BCRC 17069 / CCUG 31568 / BM 3577 / RP62A) protein is Putative antiporter subunit mnhG2 (mnhG2).